Reading from the N-terminus, the 120-residue chain is Large ribosomal subunit protein uL18 (120 aa).

This sequence belongs to the universal ribosomal protein uL18 family. As to quaternary structure, part of the 50S ribosomal subunit; part of the 5S rRNA/L5/L18/L25 subcomplex. Contacts the 5S and 23S rRNAs.

This is one of the proteins that bind and probably mediate the attachment of the 5S RNA into the large ribosomal subunit, where it forms part of the central protuberance. The protein is Large ribosomal subunit protein uL18 of Bartonella bacilliformis (strain ATCC 35685 / KC583 / Herrer 020/F12,63).